A 171-amino-acid polypeptide reads, in one-letter code: Cadmium-induced protein AS8 (171 aa).

The chain is Cadmium-induced protein AS8 from Arabidopsis thaliana (Mouse-ear cress).